Reading from the N-terminus, the 422-residue chain is MEPKRLEIPGSVLDDLCSRFILHIPSEERDNAIRVCFQIELAHWFYLDFYMQNTPGLPQCGIRDFAKAVFSHCPFLLPQGEDVEKILDEWKEYKMGVPTYGAIILDETLENVLLVQGYLAKSGWGFPKGKVNKEEAPHDCAAREVFEETGFDIKDYICKDDYIELRINDQLARLYIIPGVPKDTKFNPKTRREIRNIEWFSIEKLPCHRNDMTPKSKLGLAPNKFFMAIPFIRPLRDWLSRRFGDSSDSDNGFSSAGSTPARPTVEKLSRTKFRHSQQLFPEGSPSDQWVKHRQPLQQKSHSNHGEVSDLLKAKNQNMRGNGRKQYQDSPNQKKRANGVHGQPAKQQNPLVKCEKKLHPRKLQDNFETDATCDLPCSGEEPSVEHAEGHSVACNGHCKFPFSSRAFLSFKFDQNAIMKILDL.

The region spanning 95–226 is the Nudix hydrolase domain; that stretch reads MGVPTYGAII…KLGLAPNKFF (132 aa). The Nudix box motif lies at 129–150; that stretch reads GKVNKEEAPHDCAAREVFEETG. 2 residues coordinate Mn(2+): Glu144 and Glu148. 5 positions are modified to phosphoserine: Ser246, Ser247, Ser249, Ser276, and Ser284. The disordered stretch occupies residues 247 to 347; that stretch reads SDSDNGFSSA…GVHGQPAKQQ (101 aa). A compositionally biased stretch (low complexity) spans 249–258; that stretch reads SDNGFSSAGS. The span at 303–312 shows a compositional bias: basic and acidic residues; it reads NHGEVSDLLK.

It belongs to the Nudix hydrolase family. DCP2 subfamily. Found in a mRNA decay complex with LSM1, LSM3, LSM4, EXOSC2, EXOSC4, EXOSC10, PARN, XRN1, CNOT6, UPF1, UPF2 and UPF3B. Forms a complex with DCP1A, EDC3, DDX6 and EDC4/HEDLS, within this complex directly interacts with EDC4/HEDLS. Interacts with DPC1B, UPF1, UPF2 and UPF3B. Associates with polysomes. Interacts (via N-terminus and C-terminus) with TRIM21 (via N-terminus and C-terminus). Interacts with LIMD1, WTIP and AJUBA. Interacts with DDX17 in an RNA-dependent manner. Interacts with ZC3HAV1. Interacts with APOBEC3G in an RNA-dependent manner. Interacts with ZFP36L1 (via N-terminus). Interacts with NBDY. Mn(2+) is required as a cofactor. It depends on Mg(2+) as a cofactor. Strongly expressed in brain and testis. Weakly expressed in lung. Not detected in heart, liver, kidney and muscle (at protein level).

It localises to the cytoplasm. The protein localises to the P-body. It is found in the nucleus. It catalyses the reaction a 5'-end (N(7)-methyl 5'-triphosphoguanosine)-ribonucleoside in mRNA + H2O = N(7)-methyl-GDP + a 5'-end phospho-ribonucleoside in mRNA + 2 H(+). Its function is as follows. Decapping metalloenzyme that catalyzes the cleavage of the cap structure on mRNAs. Removes the 7-methyl guanine cap structure from mRNA molecules, yielding a 5'-phosphorylated mRNA fragment and 7m-GDP. Necessary for the degradation of mRNAs, both in normal mRNA turnover and in nonsense-mediated mRNA decay. Plays a role in replication-dependent histone mRNA degradation. Has higher activity towards mRNAs that lack a poly(A) tail. Has no activity towards a cap structure lacking an RNA moiety. The presence of a N(6)-methyladenosine methylation at the second transcribed position of mRNAs (N(6),2'-O-dimethyladenosine cap; m6A(m)) provides resistance to DCP2-mediated decapping. Blocks autophagy in nutrient-rich conditions by repressing the expression of ATG-related genes through degradation of their transcripts. This is m7GpppN-mRNA hydrolase (Dcp2) from Mus musculus (Mouse).